A 431-amino-acid chain; its full sequence is Lipoyl synthase 2, mitochondrial (431 aa).

The segment at 21 to 43 (SPLGKLQEERGEGVAKDPKKDKQ) is disordered. A compositionally biased stretch (basic and acidic residues) spans 26–40 (LQEERGEGVAKDPKK). [4Fe-4S] cluster contacts are provided by Cys127, Cys132, Cys138, Cys159, Cys163, Cys166, and Ser375. A Radical SAM core domain is found at 142 to 364 (DEEEGTATAT…EEEAMAMGFL (223 aa)).

The protein belongs to the radical SAM superfamily. Lipoyl synthase family. [4Fe-4S] cluster serves as cofactor.

The protein resides in the mitochondrion. It carries out the reaction [[Fe-S] cluster scaffold protein carrying a second [4Fe-4S](2+) cluster] + N(6)-octanoyl-L-lysyl-[protein] + 2 oxidized [2Fe-2S]-[ferredoxin] + 2 S-adenosyl-L-methionine + 4 H(+) = [[Fe-S] cluster scaffold protein] + N(6)-[(R)-dihydrolipoyl]-L-lysyl-[protein] + 4 Fe(3+) + 2 hydrogen sulfide + 2 5'-deoxyadenosine + 2 L-methionine + 2 reduced [2Fe-2S]-[ferredoxin]. The protein operates within protein modification; protein lipoylation via endogenous pathway; protein N(6)-(lipoyl)lysine from octanoyl-[acyl-carrier-protein]: step 2/2. Functionally, catalyzes the radical-mediated insertion of two sulfur atoms into the C-6 and C-8 positions of the octanoyl moiety bound to the lipoyl domains of lipoate-dependent enzymes, thereby converting the octanoylated domains into lipoylated derivatives. The chain is Lipoyl synthase 2, mitochondrial from Trypanosoma cruzi (strain CL Brener).